The chain runs to 186 residues: Orotate phosphoribosyltransferase (186 aa).

Residues arginine 93, lysine 94, lysine 97, histidine 99, and 119–127 (EDVTTTGGS) each bind 5-phospho-alpha-D-ribose 1-diphosphate. Orotate is bound by residues threonine 123 and arginine 151.

It belongs to the purine/pyrimidine phosphoribosyltransferase family. PyrE subfamily. As to quaternary structure, homodimer. Mg(2+) is required as a cofactor.

The enzyme catalyses orotidine 5'-phosphate + diphosphate = orotate + 5-phospho-alpha-D-ribose 1-diphosphate. It participates in pyrimidine metabolism; UMP biosynthesis via de novo pathway; UMP from orotate: step 1/2. Catalyzes the transfer of a ribosyl phosphate group from 5-phosphoribose 1-diphosphate to orotate, leading to the formation of orotidine monophosphate (OMP). The sequence is that of Orotate phosphoribosyltransferase from Pyrococcus horikoshii (strain ATCC 700860 / DSM 12428 / JCM 9974 / NBRC 100139 / OT-3).